Reading from the N-terminus, the 1088-residue chain is RNA-directed RNA polymerase (1088 aa).

The RdRp catalytic domain maps to 501–687; the sequence is LSYGDVTRFL…AKRYIAGGKI (187 aa).

This sequence belongs to the reoviridae RNA-directed RNA polymerase family. As to quaternary structure, interacts with VP3 (Potential). Interacts with VP2; this interaction activates VP1. Interacts with NSP5; this interaction is probably necessary for the formation of functional virus factories. Interacts with NSP2; this interaction is weak. The cofactor is Mg(2+).

The protein resides in the virion. It catalyses the reaction RNA(n) + a ribonucleoside 5'-triphosphate = RNA(n+1) + diphosphate. Functionally, RNA-directed RNA polymerase that is involved in both transcription and genome replication. Together with VP3 capping enzyme, forms an enzyme complex positioned near the channels situated at each of the five-fold vertices of the core. Following infection, the outermost layer of the virus is lost, leaving a double-layered particle (DLP) made up of the core and VP6 shell. VP1 then catalyzes the transcription of fully conservative plus-strand genomic RNAs that are extruded through the DLP's channels into the cytoplasm where they function as mRNAs for translation of viral proteins. One copy of each of the viral (+)RNAs is also recruited during core assembly, together with newly synthesized polymerase complexes and VP2. The polymerase of these novo-formed particles catalyzes the synthesis of complementary minus-strands leading to dsRNA formation. To do so, the polymerase specifically recognizes and binds 4 bases 5'-UGUG-3' in the conserved 3'-sequence of plus-strand RNA templates. VP2 presumably activates the autoinhibited VP1-RNA complex to coordinate packaging and genome replication. Once dsRNA synthesis is complete, the polymerase switches to the transcriptional mode, thus providing secondary transcription. This chain is RNA-directed RNA polymerase, found in Homo sapiens (Human).